A 352-amino-acid polypeptide reads, in one-letter code: Ion-translocating oxidoreductase complex subunit D (352 aa).

The next 5 membrane-spanning stretches (helical) occupy residues 20 to 40, 42 to 62, 78 to 109, 123 to 143, and 148 to 168; these read IMLL…WFFG, GTLV…ALVL, ALLT…VIIA, PAMI…TSWL, and IAVN…GHTA. FMN phosphoryl threonine is present on Thr187. 5 helical membrane passes run 214–234, 242–262, 267–287, 301–321, and 322–342; these read ILAG…GVWL, WHIP…GWLF, LAAP…FFIL, LIFG…GGYP, and DGVA…DYYT.

It belongs to the NqrB/RnfD family. As to quaternary structure, the complex is composed of six subunits: RsxA, RsxB, RsxC, RsxD, RsxE and RsxG. Requires FMN as cofactor.

It is found in the cell inner membrane. In terms of biological role, part of a membrane-bound complex that couples electron transfer with translocation of ions across the membrane. Required to maintain the reduced state of SoxR. This Escherichia coli O157:H7 protein is Ion-translocating oxidoreductase complex subunit D.